The primary structure comprises 525 residues: GMP synthase [glutamine-hydrolyzing] (525 aa).

The Glutamine amidotransferase type-1 domain maps to 8–206 (PLLILDFGSQ…VVDICKASTD (199 aa)). The active-site Nucleophile is C85. Catalysis depends on residues H180 and E182. The 194-residue stretch at 207-400 (WTPEHIIDEA…LGLPHDMVYR (194 aa)) folds into the GMPS ATP-PPase domain. ATP is bound at residue 234-240 (SGGVDSS).

Homodimer.

It catalyses the reaction XMP + L-glutamine + ATP + H2O = GMP + L-glutamate + AMP + diphosphate + 2 H(+). Its pathway is purine metabolism; GMP biosynthesis; GMP from XMP (L-Gln route): step 1/1. Catalyzes the synthesis of GMP from XMP. This chain is GMP synthase [glutamine-hydrolyzing], found in Legionella pneumophila subsp. pneumophila (strain Philadelphia 1 / ATCC 33152 / DSM 7513).